The sequence spans 444 residues: Xylose isomerase (444 aa).

The Mg(2+) site is built by D307 and D309.

This sequence belongs to the xylose isomerase family. As to quaternary structure, homotetramer. The cofactor is Mg(2+).

It localises to the cytoplasm. It catalyses the reaction alpha-D-xylose = alpha-D-xylulofuranose. This Thermotoga neapolitana (strain ATCC 49049 / DSM 4359 / NBRC 107923 / NS-E) protein is Xylose isomerase.